Here is a 350-residue protein sequence, read N- to C-terminus: Isopentenyl-diphosphate delta-isomerase (350 aa).

15–16 (RK) is a binding site for substrate. FMN-binding positions include Ser-73, 74–76 (SMT), Ser-104, and Asn-132. 104-106 (SQR) provides a ligand contact to substrate. Gln-167 provides a ligand contact to substrate. Glu-168 contacts Mg(2+). FMN is bound by residues Lys-199, Thr-229, 279–281 (GLR), and 300–301 (AM).

The protein belongs to the IPP isomerase type 2 family. In terms of assembly, homooctamer. Dimer of tetramers. The cofactor is FMN. NADPH serves as cofactor. Requires Mg(2+) as cofactor.

It is found in the cytoplasm. The enzyme catalyses isopentenyl diphosphate = dimethylallyl diphosphate. In terms of biological role, involved in the biosynthesis of isoprenoids. Catalyzes the 1,3-allylic rearrangement of the homoallylic substrate isopentenyl (IPP) to its allylic isomer, dimethylallyl diphosphate (DMAPP). In Nostoc sp. (strain PCC 7120 / SAG 25.82 / UTEX 2576), this protein is Isopentenyl-diphosphate delta-isomerase.